A 57-amino-acid polypeptide reads, in one-letter code: Small ribosomal subunit protein eS31 (57 aa).

Residues C29, C32, C47, and C50 each contribute to the Zn(2+) site. Residues 29 to 50 (CPRCGPGVFMANHKDRWSCGRC) form a C4-type zinc finger.

This sequence belongs to the eukaryotic ribosomal protein eS31 family. In terms of assembly, part of the 30S ribosomal subunit. It depends on Zn(2+) as a cofactor.

This chain is Small ribosomal subunit protein eS31, found in Thermococcus kodakarensis (strain ATCC BAA-918 / JCM 12380 / KOD1) (Pyrococcus kodakaraensis (strain KOD1)).